We begin with the raw amino-acid sequence, 415 residues long: Probable G-protein coupled receptor 19 (415 aa).

Over 1 to 69 (MVFAHRMDND…LNPGEVATAS (69 aa)) the chain is Extracellular. Residues Asn-25 and Asn-52 are each glycosylated (N-linked (GlcNAc...) asparagine). Residues 70–90 (IFFGALWLFSIFGNSLVCLVI) traverse the membrane as a helical segment. Over 91-102 (HRSRRTQSTTNY) the chain is Cytoplasmic. The helical transmembrane segment at 103 to 123 (FVVSMACADLLISVASTPFVV) threads the bilayer. Over 124–152 (LQFTTGRWTLGSAMCKVVRYFQYLTPGVQ) the chain is Extracellular. The cysteines at positions 138 and 210 are disulfide-linked. A helical transmembrane segment spans residues 153-173 (IYVLLSICIDRFYTIVYPLSF). The Cytoplasmic segment spans residues 174-182 (KVSREKAKK). Residues 183-203 (MIAASWILDAAFVTPVFFFYG) traverse the membrane as a helical segment. The Extracellular segment spans residues 204 to 221 (SNWDSHCNYFLPPSWEGT). Residues 222–242 (AYTVIHFLVGFVIPSILIILF) form a helical membrane-spanning segment. The Cytoplasmic segment spans residues 243–277 (YQKVIKYIWRIGTDGRTLRRTMNIVPRTKVKTVKM). Residues 278-298 (FLLLNLVFLFSWLPFHVAQLW) traverse the membrane as a helical segment. The Extracellular portion of the chain corresponds to 299-309 (HPHEQDYKKSS). A helical transmembrane segment spans residues 310-332 (LVFTAVTWVSFSSSASKPTLYSI). The Cytoplasmic portion of the chain corresponds to 333 to 415 (YNANFRRGMK…INSNPPNTFV (83 aa)).

It belongs to the G-protein coupled receptor 1 family. In terms of tissue distribution, strongly expressed in the brain.

It localises to the cell membrane. G-protein coupled receptor that plays a role in the regulation of circadian rhythms and energy metabolism. Participates in maintaining proper circadian gene expression in the suprachiasmatic nucleus (SCN), the locus of the master circadian clock in the brain. May function as a coordinator of aging-associated metabolic dysfunction, stress response, DNA integrity management, and eventual senescence. Upon binding to adropin, modulates mitochondrial energy metabolism via the p44/42-PDK4 signaling pathway, influencing pyruvate dehydrogenase activity. The chain is Probable G-protein coupled receptor 19 (Gpr19) from Mus musculus (Mouse).